A 302-amino-acid chain; its full sequence is MKKVKVCAPGTSANLGPGYDIFGIALSKPYDIVTIEKVDEFGIKITLEGEKAEEIPTNVEENTAGVVAKKMIEDFKIESGIHIHIVKGIKPGSGLGSSSASCAGVAFGLNELFELKLSKLDLVKYASLGEAVAAGAPHADNVAPAIFGGFTLTTNYEPLEVLHIPVEIDVIVALPNIQVSTKSAREILPKEVPMKSMVNNVGKAAGMIYALYNNDLDLFGQYMSKDAVVEPCRAQLITGYLEIKEKLKDLVYGVTISGSGPAIIAIPKKEHVIDIKNIFKEVYNCPVYYTRVGLGCYIEEIE.

Position 90–100 (90–100 (KPGSGLGSSSA)) interacts with ATP.

Belongs to the GHMP kinase family. Homoserine kinase subfamily.

The protein localises to the cytoplasm. It carries out the reaction L-homoserine + ATP = O-phospho-L-homoserine + ADP + H(+). The protein operates within amino-acid biosynthesis; L-threonine biosynthesis; L-threonine from L-aspartate: step 4/5. In terms of biological role, catalyzes the ATP-dependent phosphorylation of L-homoserine to L-homoserine phosphate. The chain is Homoserine kinase from Methanococcus vannielii (strain ATCC 35089 / DSM 1224 / JCM 13029 / OCM 148 / SB).